The following is a 209-amino-acid chain: Ribosomal RNA large subunit methyltransferase E (209 aa).

Residues glycine 63, tryptophan 65, aspartate 83, aspartate 99, and aspartate 124 each contribute to the S-adenosyl-L-methionine site. Residue lysine 164 is the Proton acceptor of the active site.

The protein belongs to the class I-like SAM-binding methyltransferase superfamily. RNA methyltransferase RlmE family.

The protein resides in the cytoplasm. It catalyses the reaction uridine(2552) in 23S rRNA + S-adenosyl-L-methionine = 2'-O-methyluridine(2552) in 23S rRNA + S-adenosyl-L-homocysteine + H(+). Functionally, specifically methylates the uridine in position 2552 of 23S rRNA at the 2'-O position of the ribose in the fully assembled 50S ribosomal subunit. This chain is Ribosomal RNA large subunit methyltransferase E, found in Shewanella sp. (strain ANA-3).